The chain runs to 77 residues: Fungal protease inhibitor F (77 aa).

The N-terminal stretch at 1-22 is a signal peptide; sequence MASKNLFVLFFIFALFAANIAA. 4 cysteine pairs are disulfide-bonded: cysteine 25–cysteine 57, cysteine 36–cysteine 49, cysteine 40–cysteine 77, and cysteine 59–cysteine 71.

It belongs to the protease inhibitor I40 family. In terms of tissue distribution, hemolymph.

The protein localises to the secreted. Highly specific for fungal protease and subtilisin. This is Fungal protease inhibitor F from Bombyx mori (Silk moth).